A 394-amino-acid polypeptide reads, in one-letter code: GTPase Era, mitochondrial (394 aa).

The 249-residue stretch at 32-280 (KCLQLAVIGA…RDHLMSISPQ (249 aa)) folds into the Era-type G domain. The tract at residues 40 to 47 (GAPNVGKS) is G1. Residue 40–47 (GAPNVGKS) participates in GTP binding. Positions 66-70 (DTTTR) are G2. Positions 87 to 90 (DSPG) are G3. GTP-binding positions include 87–91 (DSPGA) and 160–163 (NKID). The tract at residues 160–163 (NKID) is G4. A G5 region spans residues 259 to 261 (VSS).

Belongs to the TRAFAC class TrmE-Era-EngA-EngB-Septin-like GTPase superfamily. Era GTPase family.

It localises to the mitochondrion matrix. The protein resides in the mitochondrion inner membrane. Its function is as follows. Probable GTPase that plays a role in the mitochondrial ribosomal small subunit assembly. Specifically binds the 12S mitochondrial rRNA (12S mt-rRNA) to a 33 nucleotide section delineating the 3' terminal stem-loop region. May act as a chaperone that protects the 12S mt-rRNA on the 28S mitoribosomal subunit during ribosomal small subunit assembly. May play a role in positively regulating mitochondrial function. Plays a role in fertility. This Caenorhabditis elegans protein is GTPase Era, mitochondrial.